The sequence spans 145 residues: Large ribosomal subunit protein uL13 (145 aa).

The protein belongs to the universal ribosomal protein uL13 family. Part of the 50S ribosomal subunit.

Its function is as follows. This protein is one of the early assembly proteins of the 50S ribosomal subunit, although it is not seen to bind rRNA by itself. It is important during the early stages of 50S assembly. This is Large ribosomal subunit protein uL13 from Bacillus cytotoxicus (strain DSM 22905 / CIP 110041 / 391-98 / NVH 391-98).